A 1233-amino-acid polypeptide reads, in one-letter code: Capping protein-inhibiting regulator of actin dynamics (1233 aa).

A phosphoserine mark is found at Ser7, Ser28, and Ser132. 3 disordered regions span residues 92–136 (AENK…SAGT), 157–224 (AKHK…RRRQ), and 269–527 (LLEE…WQEV). Residues 157–176 (AKHKLAVKPKKQRVSKKHRR) are compositionally biased toward basic residues. Composition is skewed to basic and acidic residues over residues 200–211 (PGEDKPTWHEEE), 282–293 (EAERAPREEQQR), 302–322 (DAER…ERRR), and 329–362 (AEER…KRQE). Residues 321–472 (RRLQAQAQAE…EQQGRSGDFQ (152 aa)) are required for interaction with actin-capping proteins. Composition is skewed to acidic residues over residues 363–376 (EEEA…EQQE) and 397–407 (EEEDLGEEEEE). The residue at position 420 (Ser420) is a Phosphoserine. Composition is skewed to basic and acidic residues over residues 432–447 (DQER…HSEE) and 505–527 (VERK…WQEV). Phosphoserine is present on Ser556. Position 559 is a phosphothreonine (Thr559). 4 disordered regions span residues 560-586 (PAKD…HALP), 629-788 (HAEA…TTEG), 815-1082 (EFTT…TEKV), and 1097-1186 (QKGF…ISDS). Basic and acidic residues predominate over residues 677–707 (KNAESDPRSSERDQLRPGDESTPRGRCDSRG). The span at 732-742 (GTETSKQSTEA) shows a compositional bias: polar residues. A compositionally biased stretch (basic and acidic residues) spans 768–783 (ELGKGPEKSEMHREPA). 2 stretches are compositionally biased toward polar residues: residues 815–825 (EFTTSSDSETA) and 852–863 (TNYSLRFNCDQQ). The span at 876 to 889 (GDSADAGPPAAGSA) shows a compositional bias: low complexity. Positions 908–921 (QERKQAPSTRRDSA) are enriched in basic and acidic residues. Residues 956–967 (PLAQKPALAPKP) are compositionally biased toward low complexity. Thr971 is subject to Phosphothreonine. Residues Ser975 and Ser1017 each carry the phosphoserine modification. The span at 994–1040 (GRPDPEPSEPSKEDQESSDRRPPSPPGPEERKGQKRDEEEEATERKP) shows a compositional bias: basic and acidic residues. The segment covering 1047–1057 (ATQQEKPSQTP) has biased composition (polar residues). Basic and acidic residues-rich tracts occupy residues 1059-1082 (AGRK…TEKV) and 1099-1124 (GFRE…KLSK). The span at 1127–1139 (VSVSVQPGSSSVS) shows a compositional bias: low complexity. Positions 1151-1170 (PEEKRPETAVSRLERREQLK) are enriched in basic and acidic residues. The segment covering 1174-1183 (TLPTSVTVEI) has biased composition (polar residues).

As to quaternary structure, directly interacts with actin-capping proteins CAPZA1, CAPZA2 and CAPZB; this interaction decreases the binding of capping proteins to actin. As to expression, expressed in intestinal epithelial cells (at protein level).

The protein resides in the cytoplasm. It is found in the cytosol. Involved in epithelial cell integrity by acting on the maintenance of the actin cytoskeleton. Positively regulates the actin polymerization, by inhibiting the interaction of actin-capping proteins with actin. This is Capping protein-inhibiting regulator of actin dynamics from Homo sapiens (Human).